Here is a 366-residue protein sequence, read N- to C-terminus: MSTAVTMLTDTWSRRAKRFEIEGYAKILAIGTATPANWVDQTTYPDFYFRITNSQHLLEHKEKFRRICNKSNIRKRHMVLTEELLKKNPNLCTYNDASLNTRQDILVSEVPKLGKEAAMKAIKVWGRPISEITHLVFCTTSGVDMPGADFQLTKLLGLNSSVKRLMMYQQGCNAGAAMLRLAKDLAENNKGARVLVVCSEVMLSVFRGPSLQQEDNLLAQCLFGDGSAAIIIGTDPRPGLETPLFELISAAQTIIPDTDSHLKLHVREMGLTFHCSKAVPTFITQNVEDCLVKAFEPYGISDWNSIFWVLHPGGNAIVEGVEETLGLAPEKLRASRDVLSEYGNLTSACVLFILDEVRKKSKKDEQ.

Residue cysteine 172 is part of the active site.

It belongs to the thiolase-like superfamily. Chalcone/stilbene synthases family.

The catalysed reaction is (E)-4-coumaroyl-CoA + 3 malonyl-CoA + 3 H(+) = 2',4,4',6'-tetrahydroxychalcone + 3 CO2 + 4 CoA. It functions in the pathway secondary metabolite biosynthesis; flavonoid biosynthesis. The primary product of this enzyme is 4,2',4',6'-tetrahydroxychalcone (also termed naringenin-chalcone or chalcone) which can under specific conditions spontaneously isomerize into naringenin. This is Chalcone synthase B (CHSB) from Ipomoea trifida (Morning glory).